The following is a 308-amino-acid chain: Putative S-adenosyl-L-methionine-dependent methyltransferase MAB_4584c (308 aa).

S-adenosyl-L-methionine is bound by residues aspartate 131 and 160–161 (DL).

The protein belongs to the UPF0677 family.

Its function is as follows. Exhibits S-adenosyl-L-methionine-dependent methyltransferase activity. The chain is Putative S-adenosyl-L-methionine-dependent methyltransferase MAB_4584c from Mycobacteroides abscessus (strain ATCC 19977 / DSM 44196 / CCUG 20993 / CIP 104536 / JCM 13569 / NCTC 13031 / TMC 1543 / L948) (Mycobacterium abscessus).